Here is a 327-residue protein sequence, read N- to C-terminus: tRNA dimethylallyltransferase (327 aa).

14 to 21 contacts ATP; sequence GPTASGKT. 16 to 21 contacts substrate; that stretch reads TASGKT. 2 interaction with substrate tRNA regions span residues 39–42 and 163–167; these read DSAL and QRIQR.

The protein belongs to the IPP transferase family. In terms of assembly, monomer. The cofactor is Mg(2+).

The enzyme catalyses adenosine(37) in tRNA + dimethylallyl diphosphate = N(6)-dimethylallyladenosine(37) in tRNA + diphosphate. Functionally, catalyzes the transfer of a dimethylallyl group onto the adenine at position 37 in tRNAs that read codons beginning with uridine, leading to the formation of N6-(dimethylallyl)adenosine (i(6)A). This Xanthomonas oryzae pv. oryzae (strain MAFF 311018) protein is tRNA dimethylallyltransferase.